The chain runs to 152 residues: Deoxyuridine 5'-triphosphate nucleotidohydrolase (152 aa).

Residues 71 to 73 (RSG), N84, 88 to 90 (LID), and M98 contribute to the substrate site.

Belongs to the dUTPase family. Homotrimer. Mg(2+) is required as a cofactor.

It carries out the reaction dUTP + H2O = dUMP + diphosphate + H(+). Its pathway is pyrimidine metabolism; dUMP biosynthesis; dUMP from dCTP (dUTP route): step 2/2. In terms of biological role, this enzyme is involved in nucleotide metabolism: it produces dUMP, the immediate precursor of thymidine nucleotides and it decreases the intracellular concentration of dUTP so that uracil cannot be incorporated into DNA. This Escherichia coli O1:K1 / APEC protein is Deoxyuridine 5'-triphosphate nucleotidohydrolase.